Consider the following 1461-residue polypeptide: Periaxin (1461 aa).

The residue at position 7 (serine 7) is a Phosphoserine. The PDZ domain maps to 16–99; the sequence is LVEIIVETEA…YKVSFCLKRT (84 aa). Positions 70 to 84 match the Nuclear export signal motif; the sequence is VFFENFKYEDALRLL. The short motif at 118-196 is the Nuclear localization signal element; that stretch reads KGPRAKVAKL…RLQLPRLRVR (79 aa). Phosphoserine is present on serine 133. 55 tandem repeats follow at residues 431 to 435, 439 to 443, 447 to 451, 455 to 459, 463 to 467, 468 to 472, 473 to 477, 481 to 485, 486 to 490, 494 to 498, 499 to 503, 507 to 511, 512 to 516, 520 to 524, 525 to 529, 533 to 537, 538 to 542, 546 to 550, 551 to 555, 559 to 563, 564 to 568, 572 to 576, 577 to 581, 582 to 586, 590 to 594, 595 to 599, 600 to 604, 608 to 612, 613 to 617, 618 to 622, 626 to 630, 631 to 635, 636 to 640, 644 to 648, 649 to 653, 654 to 658, 662 to 666, 670 to 674, 675 to 679, 683 to 687, 688 to 692, 696 to 700, 701 to 705, 706 to 710, 714 to 718, 719 to 723, 724 to 728, 732 to 736, 737 to 741, 742 to 746, 750 to 754, 755 to 759, 760 to 764, 771 to 775, and 779 to 783. The segment at 431 to 783 is 55 X 5 AA approximate tandem repeats of [LVMAG]-[PSREQC]-[EDKL]-[LIVMAP]-[AQKHRPE]; that may have a tripeptide spacer of [LV]-P-[KER]; sequence GPEVKVPKGP…VKLPRAPEVQ (353 aa). A phosphoserine mark is found at serine 900 and serine 1082. Residues 1318–1327 are compositionally biased toward basic and acidic residues; that stretch reads EGAEEGEKAK. The interval 1318–1461 is disordered; it reads EGAEEGEKAK…RMEGAQAAAV (144 aa). 6 positions are modified to phosphoserine: serine 1349, serine 1351, serine 1363, serine 1401, serine 1407, and serine 1439. The segment covering 1352 to 1363 has biased composition (acidic residues); the sequence is PEEEEEEEEEGS.

Belongs to the periaxin family. As to quaternary structure, homodimer (via PDZ domain). Interacts with SCN10A. Found in a complex with SCN10A. Interacts with DRP2. Identified in a dystroglycan complex that contains at least PRX, DRP2, UTRN, DMD and DAG1. Detected in a complex composed of at least EZR, AHNAK, PPL and PRX. Identified in a complex with EZR, AHNAK, BFSP1, BFSP2, ANK2, PLEC, VIM and spectrin. Detected in spinal cord. Isoform 1 and isoform 2 are found in sciatic nerve and Schwann cells.

It is found in the cell membrane. The protein localises to the nucleus. Its subcellular location is the cytoplasm. The protein resides in the cell junction. Scaffolding protein that functions as part of a dystroglycan complex in Schwann cells, and as part of EZR and AHNAK-containing complexes in eye lens fiber cells. Required for the maintenance of the peripheral myelin sheath that is essential for normal transmission of nerve impulses and normal perception of sensory stimuli. Required for normal transport of MBP mRNA from the perinuclear to the paranodal regions. Required for normal remyelination after nerve injury. Required for normal elongation of Schwann cells and normal length of the internodes between the nodes of Ranvier. The demyelinated nodes of Ranvier permit saltatory transmission of nerve impulses; shorter internodes cause slower transmission of nerve impulses. Required for the formation of appositions between the abaxonal surface of the myelin sheath and the Schwann cell plasma membrane; the Schwann cell cytoplasm is restricted to regions between these appositions. Required for the formation of Cajal bands and of Schmidt-Lanterman incisures that correspond to short, cytoplasm-filled regions on myelinated nerves. Recruits DRP2 to the Schwann cell plasma membrane. Required for normal protein composition of the eye lens fiber cell plasma membrane and normal eye lens fiber cell morphology. This chain is Periaxin (PRX), found in Homo sapiens (Human).